A 397-amino-acid chain; its full sequence is Putative efflux system protein YvrP (397 aa).

Residues 8–28 (LIGGAICAGVLVLAGIGAGGF) traverse the membrane as a helical segment. Positions 106–183 (EDHSDEVEQA…KELAGLTKNK (78 aa)) form a coiled coil.

Belongs to the membrane fusion protein (MFP) (TC 8.A.1) family.

Its subcellular location is the cell membrane. This is Putative efflux system protein YvrP (yvrP) from Bacillus subtilis (strain 168).